We begin with the raw amino-acid sequence, 204 residues long: Ribonuclease HII (204 aa).

The 189-residue stretch at 16–204 folds into the RNase H type-2 domain; that stretch reads ESIAGCDEVG…RRSFLKKILK (189 aa). A divalent metal cation contacts are provided by D22, E23, and D120.

It belongs to the RNase HII family. The cofactor is Mn(2+). Requires Mg(2+) as cofactor.

Its subcellular location is the cytoplasm. It catalyses the reaction Endonucleolytic cleavage to 5'-phosphomonoester.. Functionally, endonuclease that specifically degrades the RNA of RNA-DNA hybrids. The chain is Ribonuclease HII from Alkaliphilus metalliredigens (strain QYMF).